The primary structure comprises 247 residues: tRNA pseudouridine synthase A (247 aa).

Catalysis depends on Asp-53, which acts as the Nucleophile. Substrate is bound at residue Tyr-111.

This sequence belongs to the tRNA pseudouridine synthase TruA family. In terms of assembly, homodimer.

The catalysed reaction is uridine(38/39/40) in tRNA = pseudouridine(38/39/40) in tRNA. Functionally, formation of pseudouridine at positions 38, 39 and 40 in the anticodon stem and loop of transfer RNAs. This chain is tRNA pseudouridine synthase A, found in Bacillus velezensis (strain DSM 23117 / BGSC 10A6 / LMG 26770 / FZB42) (Bacillus amyloliquefaciens subsp. plantarum).